Reading from the N-terminus, the 217-residue chain is GTP cyclohydrolase 1 (217 aa).

Zn(2+) contacts are provided by Cys109, His112, and Cys180.

The protein belongs to the GTP cyclohydrolase I family. Toroid-shaped homodecamer, composed of two pentamers of five dimers.

The catalysed reaction is GTP + H2O = 7,8-dihydroneopterin 3'-triphosphate + formate + H(+). The protein operates within cofactor biosynthesis; 7,8-dihydroneopterin triphosphate biosynthesis; 7,8-dihydroneopterin triphosphate from GTP: step 1/1. In Vibrio cholerae serotype O1 (strain ATCC 39315 / El Tor Inaba N16961), this protein is GTP cyclohydrolase 1.